A 336-amino-acid polypeptide reads, in one-letter code: Aspartate--ammonia ligase (336 aa).

Belongs to the class-II aminoacyl-tRNA synthetase family. AsnA subfamily.

It localises to the cytoplasm. The enzyme catalyses L-aspartate + NH4(+) + ATP = L-asparagine + AMP + diphosphate + H(+). It participates in amino-acid biosynthesis; L-asparagine biosynthesis; L-asparagine from L-aspartate (ammonia route): step 1/1. The sequence is that of Aspartate--ammonia ligase from Ruminiclostridium cellulolyticum (strain ATCC 35319 / DSM 5812 / JCM 6584 / H10) (Clostridium cellulolyticum).